The primary structure comprises 591 residues: MNQGKIITVSGPLVVASGMQEANIQDICRVGHLGLVGEIIEMRRDQASIQVYEETSGIGPGEPVVTTGCPLSVELGPGLISEMFDGIQRPLDRFQKATDSDFLIRGVAIPSLDRKAKWAFIPKLSVGQEVVAGDILGTVQETAVIEHRIMVPYKVSGTLVAIHAGDFTVTDTVYEIKQEDGSIYQGSLMQTWPVRQSRPVAQKLIPVEPLVTGQRVIDTFFPVTKGGAAAVPGPFGAGKTVVQHQIAKFANVDIVIYVGCGERGNEMTDVLNEFPELIDPNTGQSIMERTVLIANTSNMPVAAREASIYTGITIAEYFRDMGYSVAIMADSTSRWAEALREMSGRLQEMPGDEGYPAYLGSRIAEYYERSGRVRTLGSQEREGTITAIGAVSPPGGDISEPVTQNTLRIVKVFWGLDAPLAQRRHFPAINWLTSYSLYQDDVGSYIDRKQQSNWSNKVTRAMAILQREASLEEIVRLVGLDSLSEQDRLTMAVARQIREDYLQQNAFDSVDTFTSFPKQEAMLTNILTFNEEASKALSLGAYFNEIMEGTAQVRDRIARSKFIPEENLEQIKGLTQKVTKEIHHVLAKGGI.

ATP is bound at residue 233–240 (GPFGAGKT).

The protein belongs to the ATPase alpha/beta chains family.

The enzyme catalyses ATP + H2O + 4 H(+)(in) = ADP + phosphate + 5 H(+)(out). In terms of biological role, produces ATP from ADP in the presence of a proton gradient across the membrane. The V-type alpha chain is a catalytic subunit. The protein is V-type ATP synthase alpha chain of Streptococcus pyogenes serotype M18 (strain MGAS8232).